The sequence spans 43 residues: Protein PsbN (43 aa).

Residues T5 to F27 traverse the membrane as a helical segment.

Belongs to the PsbN family.

It localises to the plastid. The protein resides in the chloroplast thylakoid membrane. May play a role in photosystem I and II biogenesis. This Pinus koraiensis (Korean pine) protein is Protein PsbN.